Reading from the N-terminus, the 256-residue chain is Type III pantothenate kinase (256 aa).

6-13 (DIGNTNIV) is a binding site for ATP. 107–110 (GADI) provides a ligand contact to substrate. Residue aspartate 109 is the Proton acceptor of the active site. Position 129 (aspartate 129) interacts with K(+). Threonine 132 contacts ATP. Threonine 184 is a binding site for substrate.

Belongs to the type III pantothenate kinase family. Homodimer. Requires NH4(+) as cofactor. It depends on K(+) as a cofactor.

Its subcellular location is the cytoplasm. It catalyses the reaction (R)-pantothenate + ATP = (R)-4'-phosphopantothenate + ADP + H(+). It functions in the pathway cofactor biosynthesis; coenzyme A biosynthesis; CoA from (R)-pantothenate: step 1/5. In terms of biological role, catalyzes the phosphorylation of pantothenate (Pan), the first step in CoA biosynthesis. The chain is Type III pantothenate kinase from Bifidobacterium longum (strain DJO10A).